The following is a 446-amino-acid chain: sn-2 acyl-lipid omega-3 desaturase (ferredoxin), chloroplastic (446 aa).

The N-terminal 65 residues, 1–65 (MANLVLSECG…DGFTRNWALN (65 aa)), are a transit peptide targeting the chloroplast. 2 helical membrane-spanning segments follow: residues 118 to 138 (LSYV…AAYL) and 141 to 161 (WIVW…LFVL). The Histidine box-1 motif lies at 163–167 (HDCGH). Residues 199–203 (HRTHH) carry the Histidine box-2 motif. The next 3 helical transmembrane spans lie at 231–250 (RFFR…YLWA), 279–299 (TACW…IGPI), and 302–322 (LKLY…VTYL). The Histidine box-3 signature appears at 366 to 370 (HVIHH).

It belongs to the fatty acid desaturase type 1 family. Most abundant in leaves and seedlings.

The protein resides in the plastid. It localises to the chloroplast inner membrane. It catalyses the reaction a (7Z,10Z)-hexadecadienoyl-containing glycerolipid + 2 reduced [2Fe-2S]-[ferredoxin] + O2 + 2 H(+) = a (7Z,10Z,13Z)-hexadecatrienoyl-containing glycerolipid + 2 oxidized [2Fe-2S]-[ferredoxin] + 2 H2O. The catalysed reaction is a (9Z,12Z)-octadecadienoyl-containing glycerolipid + 2 reduced [2Fe-2S]-[ferredoxin] + O2 + 2 H(+) = (9Z,12Z,15Z)-octadecatrienoyl-containing glycerolipid + 2 oxidized [2Fe-2S]-[ferredoxin] + 2 H2O. It functions in the pathway lipid metabolism; polyunsaturated fatty acid biosynthesis. In terms of biological role, chloroplast omega-3 fatty acid desaturase introduces the third double bond in the biosynthesis of 16:3 and 18:3 fatty acids, important constituents of plant membranes. It is thought to use ferredoxin as an electron donor and to act on fatty acids esterified to galactolipids, sulfolipids and phosphatidylglycerol. The protein is sn-2 acyl-lipid omega-3 desaturase (ferredoxin), chloroplastic of Arabidopsis thaliana (Mouse-ear cress).